A 213-amino-acid chain; its full sequence is Cysteine dioxygenase (213 aa).

Fe cation is bound by residues His100, His102, and His160. The segment at residues 107–177 (CVMKVLKGSL…TNFAISLHLY (71 aa)) is a cross-link (3'-(S-cysteinyl)-tyrosine (Cys-Tyr)).

It belongs to the cysteine dioxygenase family. Fe cation is required as a cofactor. The thioether cross-link between Cys-107 and Tyr-177 plays a structural role through stabilizing the Fe(2+) ion, and prevents the production of highly damaging free hydroxyl radicals by holding the oxygen radical via hydroxyl hydrogen.

It carries out the reaction L-cysteine + O2 = 3-sulfino-L-alanine + H(+). The chain is Cysteine dioxygenase (CDO1) from Ajellomyces capsulatus (strain G186AR / H82 / ATCC MYA-2454 / RMSCC 2432) (Darling's disease fungus).